We begin with the raw amino-acid sequence, 2225 residues long: Multifunctional protein CAD (2225 aa).

The residue at position 2 (alanine 2) is an N-acetylalanine. The GATase (Glutamine amidotransferase) stretch occupies residues 2–365 (AALVLEDGSV…TVREAVAGNP (364 aa)). Residues serine 44, glycine 222, and glycine 224 each coordinate L-glutamine. Residues 177 to 363 (RICALDCGLK…LETVREAVAG (187 aa)) form the Glutamine amidotransferase type-1 domain. The Nucleophile; for GATase activity role is filled by cysteine 252. Residues leucine 253, glutamine 256, asparagine 294, glycine 296, and phenylalanine 297 each contribute to the L-glutamine site. Active-site for GATase activity residues include histidine 336 and glutamate 338. Residues 366–394 (GGQTVKERLVQRLCPPGLLIPGSGLPPPR) are linker. A CPSase A region spans residues 395 to 933 (KVLILGSGGL…NTHDLDFRTP (539 aa)). The CPSase (Carbamoyl phosphate synthase) stretch occupies residues 395–1455 (KVLILGSGGL…APPLKVHVDC (1061 aa)). Position 456 is a phosphothreonine; by MAPK1 (threonine 456). ATP-binding residues include arginine 515, arginine 555, glycine 561, glycine 562, lysine 592, glutamate 599, glycine 625, isoleucine 626, histidine 627, glutamine 668, and glutamate 682. The 193-residue stretch at 519-711 (AARMAEIGEH…LAYVAAKLAL (193 aa)) folds into the ATP-grasp 1 domain. The Mg(2+) site is built by glutamine 668, glutamate 682, and asparagine 684. Mn(2+) is bound by residues glutamine 668, glutamate 682, and asparagine 684. N6-acetyllysine is present on lysine 747. The CPSase B stretch occupies residues 934–1455 (HVLVLGSGVY…APPLKVHVDC (522 aa)). Phosphoserine is present on serine 1038. An ATP-grasp 2 domain is found at 1052–1243 (SRLLDTIGIS…LVALATRIIM (192 aa)). Positions 1088, 1127, 1129, 1134, 1159, 1160, 1161, 1162, 1202, and 1214 each coordinate ATP. The Mg(2+) site is built by glutamine 1202, glutamate 1214, and asparagine 1216. Mn(2+) contacts are provided by glutamine 1202, glutamate 1214, and asparagine 1216. Positions 1308–1462 (FKIPKKNILL…VDCMTSQKLV (155 aa)) constitute an MGS-like domain. Serine 1406 carries the phosphoserine; by PKA modification. Lysine 1411 carries the N6-acetyllysine modification. A DHOase (dihydroorotase) region spans residues 1456–1788 (MTSQKLVRLP…VKGTIRRVVL (333 aa)). Residues histidine 1471 and histidine 1473 each contribute to the Zn(2+) site. Positions 1475 and 1505 each coordinate (S)-dihydroorotate. Zn(2+) is bound by residues lysine 1556, histidine 1590, cysteine 1613, histidine 1614, and glutamate 1637. An N6-carboxylysine modification is found at lysine 1556. Arginine 1661 lines the (S)-dihydroorotate pocket. Aspartate 1686 contributes to the Zn(2+) binding site. Aspartate 1686 serves as the catalytic For DHOase activity. Histidine 1690 and proline 1702 together coordinate (S)-dihydroorotate. A linker region spans residues 1789 to 1917 (RGEVAYIDGQ…GLLHPQTSPL (129 aa)). The segment at 1813–1911 (PQGAVPQPPP…QNLGSSGLLH (99 aa)) is disordered. Over residues 1825-1834 (PATTEITTTP) the composition is skewed to low complexity. A Phosphoserine; by RPS6KB1 and PKA modification is found at serine 1859. A compositionally biased stretch (basic and acidic residues) spans 1866 to 1878 (EEPKEKPSRKVVE). A Phosphoserine; by PKC; in vitro modification is found at serine 1873. At threonine 1884 the chain carries Phosphothreonine. The span at 1899–1911 (ASPQNLGSSGLLH) shows a compositional bias: polar residues. A phosphoserine mark is found at serine 1900 and serine 1938. An ATCase (Aspartate transcarbamylase) region spans residues 1918-2225 (LHSLVGQHIL…ALLATVLGRF (308 aa)). The carbamoyl phosphate site is built by arginine 1975 and threonine 1976. Lysine 2003 contacts L-aspartate. Residues arginine 2024, histidine 2052, and glutamine 2055 each coordinate carbamoyl phosphate. L-aspartate-binding residues include arginine 2085 and arginine 2146. Carbamoyl phosphate is bound by residues methionine 2185 and proline 2186.

It in the N-terminal section; belongs to the CarA family. The protein in the 2nd section; belongs to the CarB family. In the 3rd section; belongs to the metallo-dependent hydrolases superfamily. DHOase family. CAD subfamily. This sequence in the C-terminal section; belongs to the aspartate/ornithine carbamoyltransferase superfamily. ATCase family. As to quaternary structure, homohexamer. Interacts with CIPC. Zn(2+) is required as a cofactor. It depends on Mg(2+) as a cofactor. Requires Mn(2+) as cofactor. Post-translationally, activated by MAP kinase (Erk1/2) phosphorylation just prior to the S phase of the cell cycle, when the demand for pyrimidine nucleotides is greatest, and down-regulated as the cells emerge from S phase by protein kinase A (PKA) phosphorylation. Phosphorylation at Ser-1859 by RPS6KB1 downstream of MTOR promotes oligomerization and stimulates dihydroorotase activity. Phosphorylation at Ser-1406 reduces sensitivity to feedback inhibition by UTP.

The protein localises to the cytoplasm. It is found in the nucleus. It carries out the reaction hydrogencarbonate + L-glutamine + 2 ATP + H2O = carbamoyl phosphate + L-glutamate + 2 ADP + phosphate + 2 H(+). It catalyses the reaction L-glutamine + H2O = L-glutamate + NH4(+). The catalysed reaction is hydrogencarbonate + NH4(+) + 2 ATP = carbamoyl phosphate + 2 ADP + phosphate + 2 H(+). The enzyme catalyses carbamoyl phosphate + L-aspartate = N-carbamoyl-L-aspartate + phosphate + H(+). It carries out the reaction (S)-dihydroorotate + H2O = N-carbamoyl-L-aspartate + H(+). It participates in pyrimidine metabolism; UMP biosynthesis via de novo pathway; (S)-dihydroorotate from bicarbonate: step 1/3. The protein operates within pyrimidine metabolism; UMP biosynthesis via de novo pathway; (S)-dihydroorotate from bicarbonate: step 2/3. It functions in the pathway pyrimidine metabolism; UMP biosynthesis via de novo pathway; (S)-dihydroorotate from bicarbonate: step 3/3. With respect to regulation, allosterically regulated and controlled by phosphorylation. 5-phosphoribose 1-diphosphate (PRPP) is an activator while UMP and UTP are inhibitors of the CPSase reaction. Multifunctional protein that encodes the first 3 enzymatic activities of the de novo pyrimidine pathway: carbamoylphosphate synthetase (CPSase; EC 6.3.5.5), aspartate transcarbamylase (ATCase; EC 2.1.3.2) and dihydroorotase (DHOase; EC 3.5.2.3). The CPSase-function is accomplished in 2 steps, by a glutamine-dependent amidotransferase activity (GATase) that binds and cleaves glutamine to produce ammonia, followed by an ammonium-dependent carbamoyl phosphate synthetase, which reacts with the ammonia, hydrogencarbonate and ATP to form carbamoyl phosphate. The endogenously produced carbamoyl phosphate is sequestered and channeled to the ATCase active site. ATCase then catalyzes the formation of carbamoyl-L-aspartate from L-aspartate and carbamoyl phosphate. In the last step, DHOase catalyzes the cyclization of carbamoyl aspartate to dihydroorotate. The chain is Multifunctional protein CAD (CAD) from Mesocricetus auratus (Golden hamster).